The sequence spans 413 residues: Tyrosine--tRNA ligase (413 aa).

An L-tyrosine-binding site is contributed by Y34. The short motif at 39–48 is the 'HIGH' region element; sequence CTAQSLHVGN. Residues Y171 and Q175 each coordinate L-tyrosine. A 'KMSKS' region motif is present at residues 231 to 235; the sequence is KMGKT. K234 is a binding site for ATP. In terms of domain architecture, S4 RNA-binding spans 346 to 411; the sequence is IPITELLVTI…GKKCHILVKI (66 aa).

The protein belongs to the class-I aminoacyl-tRNA synthetase family. TyrS type 1 subfamily. In terms of assembly, homodimer.

The protein resides in the cytoplasm. It carries out the reaction tRNA(Tyr) + L-tyrosine + ATP = L-tyrosyl-tRNA(Tyr) + AMP + diphosphate + H(+). Catalyzes the attachment of tyrosine to tRNA(Tyr) in a two-step reaction: tyrosine is first activated by ATP to form Tyr-AMP and then transferred to the acceptor end of tRNA(Tyr). The sequence is that of Tyrosine--tRNA ligase from Orientia tsutsugamushi (strain Ikeda) (Rickettsia tsutsugamushi).